Consider the following 315-residue polypeptide: GPN-loop GTPase 2 (315 aa).

12–17 (GSGKST) serves as a coordination point for GTP. A Gly-Pro-Asn (GPN)-loop; involved in dimer interface motif is present at residues 69 to 71 (GPN). Residue 172-175 (SKAD) coordinates GTP.

It belongs to the GPN-loop GTPase family. In terms of assembly, heterodimers with gpn1 or fet5/gpn3. Binds to RNA polymerase II (RNAPII).

The protein resides in the cytoplasm. Its subcellular location is the nucleus. Functionally, small GTPase required for proper nuclear import of RNA polymerase II and III (RNAPII and RNAPIII). May act at an RNAP assembly step prior to nuclear import. The sequence is that of GPN-loop GTPase 2 from Schizosaccharomyces pombe (strain 972 / ATCC 24843) (Fission yeast).